A 301-amino-acid polypeptide reads, in one-letter code: Oxygen-dependent coproporphyrinogen-III oxidase (301 aa).

Ser90 is a substrate binding site. A divalent metal cation contacts are provided by His94 and His104. His104 serves as the catalytic Proton donor. Residue 106-108 (NVR) coordinates substrate. Residues His143 and His173 each contribute to the a divalent metal cation site. Residues 238 to 273 (YVEFNLVWDRGTLFGLQSGGRTESILMSLPPVVKWR) form an important for dimerization region. 256–258 (GGR) contributes to the substrate binding site.

It belongs to the aerobic coproporphyrinogen-III oxidase family. In terms of assembly, homodimer. It depends on a divalent metal cation as a cofactor.

Its subcellular location is the cytoplasm. It carries out the reaction coproporphyrinogen III + O2 + 2 H(+) = protoporphyrinogen IX + 2 CO2 + 2 H2O. The protein operates within porphyrin-containing compound metabolism; protoporphyrin-IX biosynthesis; protoporphyrinogen-IX from coproporphyrinogen-III (O2 route): step 1/1. In terms of biological role, involved in the heme biosynthesis. Catalyzes the aerobic oxidative decarboxylation of propionate groups of rings A and B of coproporphyrinogen-III to yield the vinyl groups in protoporphyrinogen-IX. The sequence is that of Oxygen-dependent coproporphyrinogen-III oxidase from Nitrosomonas europaea (strain ATCC 19718 / CIP 103999 / KCTC 2705 / NBRC 14298).